A 765-amino-acid chain; its full sequence is 5-methyltetrahydropteroyltriglutamate--homocysteine methyltransferase (765 aa).

5-methyltetrahydropteroyltri-L-glutamate contacts are provided by K18 and N116. L-homocysteine-binding positions include 437 to 439 (IGS) and E490. L-methionine-binding positions include 437-439 (IGS) and E490. Residues D495, Y518, 521 to 522 (RC), and W567 contribute to the 5-methyltetrahydropteroyltri-L-glutamate site. An L-homocysteine-binding site is contributed by D605. Residue D605 coordinates L-methionine. Residues H647, C649, H658, D662, and E671 each contribute to the Zn(2+) site. The active-site Proton donor is the H701. Zn(2+) is bound at residue C733.

It belongs to the vitamin-B12 independent methionine synthase family. Requires Zn(2+) as cofactor.

The protein localises to the cytoplasm. It carries out the reaction 5-methyltetrahydropteroyltri-L-glutamate + L-homocysteine = tetrahydropteroyltri-L-glutamate + L-methionine. It participates in amino-acid biosynthesis; L-methionine biosynthesis via de novo pathway; L-methionine from L-homocysteine (MetE route): step 1/1. Its function is as follows. Catalyzes the transfer of a methyl group from 5-methyltetrahydrofolate to homocysteine resulting in methionine formation. This is 5-methyltetrahydropteroyltriglutamate--homocysteine methyltransferase (METE) from Catharanthus roseus (Madagascar periwinkle).